The sequence spans 134 residues: Retinoid-binding protein 7 (134 aa).

It belongs to the calycin superfamily. Fatty-acid binding protein (FABP) family. In terms of tissue distribution, expressed primarily in kidney, heart and transverse colon. Detected in adult lymph node, appendix, ascending colon, and in fetal heart and spleen.

The protein resides in the cytoplasm. Intracellular transport of retinol. In Homo sapiens (Human), this protein is Retinoid-binding protein 7 (RBP7).